A 367-amino-acid chain; its full sequence is Probable butyrate kinase (367 aa).

Belongs to the acetokinase family.

Its subcellular location is the cytoplasm. It catalyses the reaction butanoate + ATP = butanoyl phosphate + ADP. This chain is Probable butyrate kinase, found in Bacillus cereus (strain ATCC 10987 / NRS 248).